Consider the following 315-residue polypeptide: MLQEIDIKSLKGKSKVVRLKIKPDSERLPIKKPNWIRIKHVASQKVEQLKKTLRSQKLFTVCEEAQCPNLSECFNHGAATFMIMGQICTRRCPFCDVAHGKPKALDVDEPKHLANTIKKMQLKYVVITSVDRDDLRDGGAQHFKTCIDNIRLSTPKVKIEILTPDFRGRIDKVLEVFKSCSPNVFNHNLETVPSLYQKVRPGANYNYSLRLLKAFKQQHPFVITKSGLMLGVGESEKQVINVLKDLRKHNVDMLTLGQYLQPSKHHLAVEAYIHPNQFDKYKKIALKLGFSQVASGPMVRSSYHADLQIKGELIS.

[4Fe-4S] cluster-binding residues include Cys-62, Cys-67, Cys-73, Cys-88, Cys-92, Cys-95, and Ser-302. The Radical SAM core domain maps to 74 to 291; sequence FNHGAATFMI…KKIALKLGFS (218 aa).

Belongs to the radical SAM superfamily. Lipoyl synthase family. It depends on [4Fe-4S] cluster as a cofactor.

It localises to the cytoplasm. It carries out the reaction [[Fe-S] cluster scaffold protein carrying a second [4Fe-4S](2+) cluster] + N(6)-octanoyl-L-lysyl-[protein] + 2 oxidized [2Fe-2S]-[ferredoxin] + 2 S-adenosyl-L-methionine + 4 H(+) = [[Fe-S] cluster scaffold protein] + N(6)-[(R)-dihydrolipoyl]-L-lysyl-[protein] + 4 Fe(3+) + 2 hydrogen sulfide + 2 5'-deoxyadenosine + 2 L-methionine + 2 reduced [2Fe-2S]-[ferredoxin]. Its pathway is protein modification; protein lipoylation via endogenous pathway; protein N(6)-(lipoyl)lysine from octanoyl-[acyl-carrier-protein]: step 2/2. Catalyzes the radical-mediated insertion of two sulfur atoms into the C-6 and C-8 positions of the octanoyl moiety bound to the lipoyl domains of lipoate-dependent enzymes, thereby converting the octanoylated domains into lipoylated derivatives. This chain is Lipoyl synthase, found in Ruthia magnifica subsp. Calyptogena magnifica.